The sequence spans 376 residues: 4-hydroxy-3-methylbut-2-en-1-yl diphosphate synthase (flavodoxin) (376 aa).

[4Fe-4S] cluster is bound by residues C272, C275, C307, and E314.

It belongs to the IspG family. [4Fe-4S] cluster is required as a cofactor.

It catalyses the reaction (2E)-4-hydroxy-3-methylbut-2-enyl diphosphate + oxidized [flavodoxin] + H2O + 2 H(+) = 2-C-methyl-D-erythritol 2,4-cyclic diphosphate + reduced [flavodoxin]. The protein operates within isoprenoid biosynthesis; isopentenyl diphosphate biosynthesis via DXP pathway; isopentenyl diphosphate from 1-deoxy-D-xylulose 5-phosphate: step 5/6. In terms of biological role, converts 2C-methyl-D-erythritol 2,4-cyclodiphosphate (ME-2,4cPP) into 1-hydroxy-2-methyl-2-(E)-butenyl 4-diphosphate. The sequence is that of 4-hydroxy-3-methylbut-2-en-1-yl diphosphate synthase (flavodoxin) from Blochmanniella pennsylvanica (strain BPEN).